The following is a 174-amino-acid chain: Shikimate kinase (174 aa).

ATP is bound at residue 15–20 (GTGKST). Serine 19 serves as a coordination point for Mg(2+). Positions 37, 61, and 82 each coordinate substrate. Arginine 120 contacts ATP. Substrate is bound at residue arginine 138.

It belongs to the shikimate kinase family. In terms of assembly, monomer. Mg(2+) serves as cofactor.

The protein localises to the cytoplasm. It carries out the reaction shikimate + ATP = 3-phosphoshikimate + ADP + H(+). Its pathway is metabolic intermediate biosynthesis; chorismate biosynthesis; chorismate from D-erythrose 4-phosphate and phosphoenolpyruvate: step 5/7. Functionally, catalyzes the specific phosphorylation of the 3-hydroxyl group of shikimic acid using ATP as a cosubstrate. In Staphylococcus aureus (strain NCTC 8325 / PS 47), this protein is Shikimate kinase.